The primary structure comprises 325 residues: SAM pointed domain-containing Ets transcription factor (325 aa).

Disordered regions lie at residues 27–50 and 79–100; these read GTEKAASGAMGPEKQEWSPSPPAT and ARAGEDHPEEPEQCPVIDSQAS. Positions 119 to 203 constitute a PNT domain; it reads EVLKDIETAC…AHLDIWKSAA (85 aa). The ETS DNA-binding region spans 239 to 322; sequence IHLWQFLKEL…ISQRLVYQFV (84 aa).

Belongs to the ETS family. As to quaternary structure, interacts with the DNA-binding domain of the androgen receptor. Interacts with NKX3-1. In terms of tissue distribution, expressed in the accessory glands of sex organs including the prostate, seminal vesicle, coagulating gland in males, the oviduct in females, and in intestines. Expression is epithelial-specific.

Its subcellular location is the nucleus. In terms of biological role, may function as an androgen-independent transactivator of the prostate-specific antigen (PSA) promoter. Binds to 5'-GGAT-3' DNA sequences. May play a role in the regulation of the prostate gland and/or prostate cancer development. Acts as a transcriptional activator for SERPINB5 promoter. The chain is SAM pointed domain-containing Ets transcription factor (Spdef) from Mus musculus (Mouse).